Reading from the N-terminus, the 258-residue chain is Phosphonates import ATP-binding protein PhnC 3 (258 aa).

The 245-residue stretch at 2 to 246 (IEFKNVSLVY…TFEEIYGRKI (245 aa)) folds into the ABC transporter domain. An ATP-binding site is contributed by 35 to 42 (GLSGAGKS).

It belongs to the ABC transporter superfamily. Phosphonates importer (TC 3.A.1.9.1) family. In terms of assembly, the complex is composed of two ATP-binding proteins (PhnC), two transmembrane proteins (PhnE) and a solute-binding protein (PhnD).

The protein resides in the cell membrane. It carries out the reaction phosphonate(out) + ATP + H2O = phosphonate(in) + ADP + phosphate + H(+). Part of the ABC transporter complex PhnCDE involved in phosphonates import. Responsible for energy coupling to the transport system. The sequence is that of Phosphonates import ATP-binding protein PhnC 3 from Halalkalibacterium halodurans (strain ATCC BAA-125 / DSM 18197 / FERM 7344 / JCM 9153 / C-125) (Bacillus halodurans).